The following is a 115-amino-acid chain: Ribonuclease P protein component (115 aa).

It belongs to the RnpA family. In terms of assembly, consists of a catalytic RNA component (M1 or rnpB) and a protein subunit.

It carries out the reaction Endonucleolytic cleavage of RNA, removing 5'-extranucleotides from tRNA precursor.. Functionally, RNaseP catalyzes the removal of the 5'-leader sequence from pre-tRNA to produce the mature 5'-terminus. It can also cleave other RNA substrates such as 4.5S RNA. The protein component plays an auxiliary but essential role in vivo by binding to the 5'-leader sequence and broadening the substrate specificity of the ribozyme. The chain is Ribonuclease P protein component from Bacillus cereus (strain 03BB102).